The sequence spans 257 residues: Capsid protein (257 aa).

It belongs to the geminiviridae capsid protein family.

It is found in the virion. In terms of biological role, encapsidates the viral DNA into characteristic twinned ('geminate') particles. Plays a role in protection of the genome from degradation, virus acquisition and transmission by insect vectors, infectivity, and systemic movement. This chain is Capsid protein, found in Capsicum annuum (Capsicum pepper).